The following is a 504-amino-acid chain: Maturase K (504 aa).

This sequence belongs to the intron maturase 2 family. MatK subfamily.

Its subcellular location is the plastid. The protein resides in the chloroplast. Usually encoded in the trnK tRNA gene intron. Probably assists in splicing its own and other chloroplast group II introns. This is Maturase K from Eichhornia crassipes (Water hyacinth).